Consider the following 1700-residue polypeptide: Ras-responsive element-binding protein 1 (1700 aa).

The tract at residues 31 to 63 (TENGGSPQGIKSPMKPPGPNRIGRRNQETKEEK) is disordered. 2 positions are modified to phosphoserine: S36 and S42. 3 consecutive C2H2-type zinc fingers follow at residues 66-88 (YNCP…IRQH), 97-119 (HACS…MLVH), and 125-147 (YKCT…MKIH). A disordered region spans residues 146-195 (IHEKDTNSTTAAAPPSPLKRRRLSSKRKLSHDAESEDPGPAKKMVEDGQS). S161 carries the phosphoserine modification. Residues 163–174 (LKRRRLSSKRKL) show a composition bias toward basic residues. S175 and S180 each carry phosphoserine. Basic and acidic residues predominate over residues 184-195 (GPAKKMVEDGQS). The C2H2-type 4 zinc-finger motif lies at 206–228 (FHCPVCFKEFVCKYELETHMETH). Phosphoserine is present on S229. C2H2-type zinc fingers lie at residues 233–256 (LRCD…ALVH) and 314–336 (FVCD…RQSH). Glycyl lysine isopeptide (Lys-Gly) (interchain with G-Cter in SUMO2) cross-links involve residues K433, K500, K549, K564, K591, and K611. K613 is covalently cross-linked (Glycyl lysine isopeptide (Lys-Gly) (interchain with G-Cter in SUMO1); alternate). A Glycyl lysine isopeptide (Lys-Gly) (interchain with G-Cter in SUMO2); alternate cross-link involves residue K613. K622 participates in a covalent cross-link: Glycyl lysine isopeptide (Lys-Gly) (interchain with G-Cter in SUMO2). 5 C2H2-type zinc fingers span residues 641-663 (YPCR…VRSH), 669-691 (YQCN…IRTH), 697-720 (YICK…RKKH), 751-782 (TVCR…GGCH), and 788-813 (FECK…QHLH). Glycyl lysine isopeptide (Lys-Gly) (interchain with G-Cter in SUMO2) cross-links involve residues K855, K883, and K911. Disordered regions lie at residues 939 to 991 (IPKS…SLET) and 1092 to 1177 (ADPG…AVDL). The segment covering 944 to 961 (KKGDKDTVVPSDAKKPEP) has biased composition (basic and acidic residues). The residue at position 970 (S970) is a Phosphoserine. The segment covering 1097–1111 (SITSSNTVATDSPGS) has biased composition (polar residues). Residues S1125, S1137, and S1138 each carry the phosphoserine modification. The span at 1137-1146 (SSPEEALPTE) shows a compositional bias: low complexity. Residues 1155–1165 (SRKRGRKRGLR) show a composition bias toward basic residues. 4 positions are modified to phosphoserine: S1172, S1179, S1180, and S1230. Disordered regions lie at residues 1195–1235 (TNKF…AEDR), 1273–1368 (HTDS…QSLD), 1383–1521 (SEAG…RKKV), and 1564–1670 (VRHQ…SPAA). The C2H2-type 12 zinc finger occupies 1251–1273 (INCPHCPRVFPWASSLQRHMLTH). Residues 1273-1285 (HTDSQSDTDTLTT) are compositionally biased toward low complexity. Over residues 1327-1346 (SEEEEEKETEENPEPEEECR) the composition is skewed to acidic residues. The C2H2-type 13 zinc-finger motif lies at 1400 to 1422 (HACDTCGKNFKFLGTLSRHKKAH). A phosphoserine mark is found at S1450 and S1452. A compositionally biased stretch (basic and acidic residues) spans 1492 to 1507 (TAEKRGDGDKRPKTDS). 2 C2H2-type zinc fingers span residues 1520 to 1542 (KVCS…MRSH) and 1548 to 1570 (YKCQ…QRIH). Residues 1564–1580 (VRHQRIHQKARHSKHHG) are compositionally biased toward basic residues. A phosphoserine mark is found at S1593 and S1606. The span at 1645–1660 (AEQAAEPSAPKEQASP) shows a compositional bias: low complexity. The residue at position 1667 (S1667) is a Phosphoserine.

This sequence belongs to the krueppel C2H2-type zinc-finger protein family. As to quaternary structure, interacts with NEUROD1. Interacts with AR. In terms of tissue distribution, expressed in splenic B-cells.

The protein resides in the nucleus speckle. Functionally, transcription factor that binds specifically to the RAS-responsive elements (RRE) of gene promoters. Represses the angiotensinogen gene. Negatively regulates the transcriptional activity of AR. Potentiates the transcriptional activity of NEUROD1. Binds specifically to the allelic variant of the CDKN2A promoter present in Balb/c mice, which leads to a down-regulation of CDKN2A expression in this strain, and, as a consequence, to an elevated susceptibility to pristane-induced tumors. Promotes brown adipocyte differentiation. May be involved in Ras/Raf-mediated cell differentiation by enhancing calcitonin expression. In Mus musculus (Mouse), this protein is Ras-responsive element-binding protein 1 (Rreb1).